Here is a 270-residue protein sequence, read N- to C-terminus: Putative pyruvate, phosphate dikinase regulatory protein 2 (270 aa).

151 to 158 (GVSRTSKT) is an ADP binding site.

The protein belongs to the pyruvate, phosphate/water dikinase regulatory protein family. PDRP subfamily.

The enzyme catalyses N(tele)-phospho-L-histidyl/L-threonyl-[pyruvate, phosphate dikinase] + ADP = N(tele)-phospho-L-histidyl/O-phospho-L-threonyl-[pyruvate, phosphate dikinase] + AMP + H(+). The catalysed reaction is N(tele)-phospho-L-histidyl/O-phospho-L-threonyl-[pyruvate, phosphate dikinase] + phosphate + H(+) = N(tele)-phospho-L-histidyl/L-threonyl-[pyruvate, phosphate dikinase] + diphosphate. In terms of biological role, bifunctional serine/threonine kinase and phosphorylase involved in the regulation of the pyruvate, phosphate dikinase (PPDK) by catalyzing its phosphorylation/dephosphorylation. This chain is Putative pyruvate, phosphate dikinase regulatory protein 2, found in Listeria innocua serovar 6a (strain ATCC BAA-680 / CLIP 11262).